A 188-amino-acid chain; its full sequence is 3-deoxy-D-manno-octulosonate 8-phosphate phosphatase KdsC (188 aa).

The Mg(2+) site is built by Asp32 and Asp34. Substrate contacts are provided by residues Asp34, 55-59 (NVRDG), Arg63, Arg78, Arg86, and Lys102. Asp125 lines the Mg(2+) pocket.

In terms of assembly, homotetramer. The cofactor is Mg(2+). Co(2+) serves as cofactor.

It carries out the reaction 3-deoxy-alpha-D-manno-2-octulosonate-8-phosphate + H2O = 3-deoxy-alpha-D-manno-oct-2-ulosonate + phosphate. The protein operates within carbohydrate biosynthesis; 3-deoxy-D-manno-octulosonate biosynthesis; 3-deoxy-D-manno-octulosonate from D-ribulose 5-phosphate: step 3/3. It functions in the pathway bacterial outer membrane biogenesis; lipopolysaccharide biosynthesis. With respect to regulation, inhibited by calcium, cadmium, mercury, and copper ions. Catalyzes the hydrolysis of 3-deoxy-D-manno-octulosonate 8-phosphate (KDO 8-P) to 3-deoxy-D-manno-octulosonate (KDO) and inorganic phosphate. The chain is 3-deoxy-D-manno-octulosonate 8-phosphate phosphatase KdsC from Escherichia coli (strain B / BL21-DE3).